The primary structure comprises 140 residues: Putative pre-16S rRNA nuclease (140 aa).

It belongs to the YqgF nuclease family.

The protein localises to the cytoplasm. Functionally, could be a nuclease involved in processing of the 5'-end of pre-16S rRNA. This Parabacteroides distasonis (strain ATCC 8503 / DSM 20701 / CIP 104284 / JCM 5825 / NCTC 11152) protein is Putative pre-16S rRNA nuclease.